The chain runs to 495 residues: 1-aminocyclopropane-1-carboxylate synthase 6 (495 aa).

Substrate is bound by residues glutamate 58 and tyrosine 96. The residue at position 280 (lysine 280) is an N6-(pyridoxal phosphate)lysine. Residues serine 480, serine 483, and serine 488 each carry the phosphoserine modification.

It belongs to the class-I pyridoxal-phosphate-dependent aminotransferase family. In terms of assembly, homodimer and heterodimer. In vivo, the relevance of heterodimerization with other ACS enzymes is however unsure. Interacts with GRF3. It depends on pyridoxal 5'-phosphate as a cofactor. Post-translationally, phosphorylated on serine residue by MAP kinase (MPK6). In terms of processing, may be processed at its C-terminus. Expressed in roots and flowers.

It carries out the reaction S-adenosyl-L-methionine = 1-aminocyclopropane-1-carboxylate + S-methyl-5'-thioadenosine + H(+). It functions in the pathway alkene biosynthesis; ethylene biosynthesis via S-adenosyl-L-methionine; ethylene from S-adenosyl-L-methionine: step 1/2. Functionally, 1-aminocyclopropane-1-carboxylate synthase (ACS) enzymes catalyze the conversion of S-adenosyl-L-methionine (SAM) into 1-aminocyclopropane-1-carboxylate (ACC), a direct precursor of ethylene. Involved in bacterial flagellin-induced ethylene production. The sequence is that of 1-aminocyclopropane-1-carboxylate synthase 6 (ACS6) from Arabidopsis thaliana (Mouse-ear cress).